The following is a 591-amino-acid chain: Probable LRR receptor-like serine/threonine-protein kinase At1g69990 (591 aa).

The N-terminal stretch at 1–18 (MKTISIFFVIILMSSSHA) is a signal peptide. Over 19–218 (EDDVLCLKGF…GKNLTIIVTA (200 aa)) the chain is Extracellular. N46 carries N-linked (GlcNAc...) asparagine glycosylation. 5 LRR repeats span residues 66–88 (RILS…LKLC), 90–111 (SLQS…QICS), 115–137 (YLVT…IVDC), 139–162 (FLNS…TRLN), and 163–185 (RLQR…LSHY). A glycan (N-linked (GlcNAc...) asparagine) is linked at N211. A helical transmembrane segment spans residues 219-239 (GVIGAVGSLCVGFGMFWWFFI). Over 240–591 (RDRRKMNNYG…LIFNKQEHLK (352 aa)) the chain is Cytoplasmic. Phosphothreonine is present on T292. The Protein kinase domain occupies 295–573 (FDSGNIVVSS…KNLGDQHGFF (279 aa)). Residues 301–309 (VVSSRSGVS) and K323 contribute to the ATP site. Phosphoserine is present on S378. T389 bears the Phosphothreonine mark. Y463 carries the post-translational modification Phosphotyrosine. At S465 the chain carries Phosphoserine. The residue at position 466 (T466) is a Phosphothreonine. A Phosphoserine modification is found at S470.

It belongs to the protein kinase superfamily. Ser/Thr protein kinase family.

It localises to the membrane. It carries out the reaction L-seryl-[protein] + ATP = O-phospho-L-seryl-[protein] + ADP + H(+). The catalysed reaction is L-threonyl-[protein] + ATP = O-phospho-L-threonyl-[protein] + ADP + H(+). The protein is Probable LRR receptor-like serine/threonine-protein kinase At1g69990 of Arabidopsis thaliana (Mouse-ear cress).